Consider the following 103-residue polypeptide: Histone H4 (103 aa).

Residues 1-14 (MSGRGKGGKGLGKG) show a composition bias toward gly residues. The tract at residues 1–20 (MSGRGKGGKGLGKGGAKRHR) is disordered. The DNA-binding element occupies 17–21 (KRHRK).

Belongs to the histone H4 family. The nucleosome is a histone octamer containing two molecules each of H2A, H2B, H3 and H4 assembled in one H3-H4 heterotetramer and two H2A-H2B heterodimers. The octamer wraps approximately 147 bp of DNA.

Its subcellular location is the nucleus. The protein localises to the chromosome. Its function is as follows. Core component of nucleosome. Nucleosomes wrap and compact DNA into chromatin, limiting DNA accessibility to the cellular machineries which require DNA as a template. Histones thereby play a central role in transcription regulation, DNA repair, DNA replication and chromosomal stability. DNA accessibility is regulated via a complex set of post-translational modifications of histones, also called histone code, and nucleosome remodeling. The chain is Histone H4 (H4-I) from Chlamydomonas reinhardtii (Chlamydomonas smithii).